A 510-amino-acid chain; its full sequence is Nectin-4 (510 aa).

The first 31 residues, 1–31 (MPLSLGAEMWGPAAWLLLLLLLASFTGQRLA), serve as a signal peptide directing secretion. Positions 32-144 (GELETSDLVT…GSFQARLRLR (113 aa)) constitute an Ig-like V-type domain. The Extracellular portion of the chain corresponds to 32–349 (GELETSDLVT…GKQVDLVSAS (318 aa)). 3 disulfides stabilise this stretch: cysteine 52-cysteine 127, cysteine 171-cysteine 223, and cysteine 270-cysteine 315. 2 Ig-like C2-type domains span residues 148–237 (PPLP…QRIT) and 248–331 (ASVR…VVVD). N-linked (GlcNAc...) asparagine glycosylation occurs at asparagine 281. The helical transmembrane segment at 350-370 (VVVVGVIAALLFCLLVVVVVL) threads the bilayer. Residues 371 to 510 (MSRYHRRKAQ…IYINGRGHLV (140 aa)) lie on the Cytoplasmic side of the membrane. Over residues 400-412 (RLHSHHSDPRNQP) the composition is skewed to basic and acidic residues. The segment at 400–475 (RLHSHHSDPR…GRAEEEEDRD (76 aa)) is disordered.

The protein belongs to the nectin family. In terms of assembly, self-associates. Interacts via its Ig-like V-type domain with NECTIN1 Ig-like V-type domain. Interacts via its C-terminus with AFDN. Interacts with TIGIT.

It localises to the cell membrane. The protein localises to the cell junction. It is found in the adherens junction. Seems to be involved in cell adhesion through trans-homophilic and -heterophilic interactions, the latter including specifically interactions with NECTIN1. Plays a role in the senescence-associated cell size enlargement via SFK/PI3K/Rac1 and thus promotes senescent cell survival. Also participates in the innate immune response by acting as a ligand for the receptor TIGIT to inhibit NK-cell activity. The protein is Nectin-4 of Bos taurus (Bovine).